The primary structure comprises 253 residues: Triosephosphate isomerase, cytosolic (253 aa).

The substrate site is built by Asn10 and Lys12. Residue His96 is the Electrophile of the active site. Glu166 functions as the Proton acceptor in the catalytic mechanism.

The protein belongs to the triosephosphate isomerase family. In terms of assembly, homodimer.

The protein localises to the cytoplasm. It carries out the reaction D-glyceraldehyde 3-phosphate = dihydroxyacetone phosphate. The protein operates within carbohydrate biosynthesis; gluconeogenesis. It participates in carbohydrate degradation; glycolysis; D-glyceraldehyde 3-phosphate from glycerone phosphate: step 1/1. The chain is Triosephosphate isomerase, cytosolic from Secale cereale (Rye).